Consider the following 95-residue polypeptide: Integration host factor subunit beta (95 aa).

Positions 56-76 (RAPRTGRNPKTGTSVDLDGKY) are disordered.

Belongs to the bacterial histone-like protein family. As to quaternary structure, heterodimer of an alpha and a beta chain.

This protein is one of the two subunits of integration host factor, a specific DNA-binding protein that functions in genetic recombination as well as in transcriptional and translational control. The sequence is that of Integration host factor subunit beta from Shewanella sediminis (strain HAW-EB3).